Reading from the N-terminus, the 241-residue chain is Sugar fermentation stimulation protein homolog (241 aa).

This sequence belongs to the SfsA family.

This is Sugar fermentation stimulation protein homolog from Nostoc sp. (strain PCC 7120 / SAG 25.82 / UTEX 2576).